The sequence spans 63 residues: Conotoxin Pu5.4 (63 aa).

Positions 1-22 (MRCVPVFVILLLLIASTPSVDA) are cleaved as a signal peptide. The propeptide occupies 23-50 (TQKTKDDMSLASFHDNAKRFLQTLRNTR). Tryptophan amide is present on tryptophan 62.

Belongs to the conotoxin T superfamily. Post-translationally, contains 2 disulfide bonds that can be either 'C1-C3, C2-C4' or 'C1-C4, C2-C3', since these disulfide connectivities have been observed for conotoxins with cysteine framework V (for examples, see AC P0DQQ7 and AC P81755). In terms of tissue distribution, expressed by the venom duct.

It localises to the secreted. In Conus pulicarius (Flea-bitten cone), this protein is Conotoxin Pu5.4.